A 110-amino-acid chain; its full sequence is UPF0060 membrane protein Mfla_2554 (110 aa).

The next 4 membrane-spanning stretches (helical) occupy residues 7–27 (VALF…PYLW), 33–53 (SPLL…LLTL), 61–81 (VYAA…WVVD), and 83–103 (IIPS…MAII).

This sequence belongs to the UPF0060 family.

The protein resides in the cell inner membrane. This is UPF0060 membrane protein Mfla_2554 from Methylobacillus flagellatus (strain ATCC 51484 / DSM 6875 / VKM B-1610 / KT).